A 177-amino-acid polypeptide reads, in one-letter code: ATP-dependent protease subunit HslV (177 aa).

Threonine 7 is an active-site residue. Alanine 162, cysteine 165, and threonine 168 together coordinate Na(+).

This sequence belongs to the peptidase T1B family. HslV subfamily. As to quaternary structure, a double ring-shaped homohexamer of HslV is capped on each side by a ring-shaped HslU homohexamer. The assembly of the HslU/HslV complex is dependent on binding of ATP.

The protein resides in the cytoplasm. The enzyme catalyses ATP-dependent cleavage of peptide bonds with broad specificity.. Its activity is regulated as follows. Allosterically activated by HslU binding. In terms of biological role, protease subunit of a proteasome-like degradation complex believed to be a general protein degrading machinery. The protein is ATP-dependent protease subunit HslV of Thioalkalivibrio sulfidiphilus (strain HL-EbGR7).